Consider the following 71-residue polypeptide: ATP synthase subunit c (71 aa).

2 consecutive transmembrane segments (helical) span residues 5-25 (AIGI…AIIV) and 47-67 (FIGA…AFLL).

Belongs to the ATPase C chain family. F-type ATPases have 2 components, F(1) - the catalytic core - and F(0) - the membrane proton channel. F(1) has five subunits: alpha(3), beta(3), gamma(1), delta(1), epsilon(1). F(0) has three main subunits: a(1), b(2) and c(10-14). The alpha and beta chains form an alternating ring which encloses part of the gamma chain. F(1) is attached to F(0) by a central stalk formed by the gamma and epsilon chains, while a peripheral stalk is formed by the delta and b chains.

Its subcellular location is the cell membrane. In terms of biological role, f(1)F(0) ATP synthase produces ATP from ADP in the presence of a proton or sodium gradient. F-type ATPases consist of two structural domains, F(1) containing the extramembraneous catalytic core and F(0) containing the membrane proton channel, linked together by a central stalk and a peripheral stalk. During catalysis, ATP synthesis in the catalytic domain of F(1) is coupled via a rotary mechanism of the central stalk subunits to proton translocation. Its function is as follows. Key component of the F(0) channel; it plays a direct role in translocation across the membrane. A homomeric c-ring of between 10-14 subunits forms the central stalk rotor element with the F(1) delta and epsilon subunits. The chain is ATP synthase subunit c from Shouchella clausii (strain KSM-K16) (Alkalihalobacillus clausii).